A 553-amino-acid polypeptide reads, in one-letter code: MSLFLKPFLFLYDTTLSLLLLLFNGWSLEDTAAAQKRREADKNAAETEWIQLQYLWTKTRSVVLLPVFKGLVVMCLVLSIIVFFESFYMNFVILFVKLFKRKPHKVYKWEAMQEDVEVGPDNYPMVLIQIPMYNEKEVFQLSIAAICSLVWPSSRLVVQVVDDSTDPAVREGVDVEIAKWQSQGINIRCERRDNRNGYKAGAMKEALTQSYVKQCDFVAVFDADFQPEPDYLIRAVPFLVHNPDVALVQARWIFVNANKCLMTRMQEMSLNYHFKVEQESGSTRHAFFGFNGTAGVWRISAMEAAGGWKSRTTVEDMDLAVRVGLHGWKFVYLNDLTVRNELPSKFKAYRFQQHRWSCGPANLFRKMTMEIIFNKRVSIWKKFYVIYSFFFVRKVAVHFLTFFFYCIIVPTSVFFPEIHIPSWSTIYVPSLISIFHTLATPRSFYLVIFWVLFENVMAMHRTKGTCIGLLEGGRVNEWVVTEKLGDALKSKLLSRVVQRKSCYQRVNSKEVMVGVYILGCALYGLIYGHTWLHFYLFLQATAFFVSGFGFVGT.

The chain crosses the membrane as a helical span at residues 64-84 (LLPVFKGLVVMCLVLSIIVFF). Aspartate 163 is a catalytic residue. Residues aspartate 222 and aspartate 224 each contribute to the substrate site. Aspartate 316 is an active-site residue. The next 4 helical transmembrane spans lie at 395-415 (VAVH…SVFF), 431-451 (LISI…IFWV), 510-530 (EVMV…YGHT), and 531-551 (WLHF…FGFV).

This sequence belongs to the glycosyltransferase 2 family. Plant cellulose synthase-like A subfamily.

It is found in the golgi apparatus membrane. The enzyme catalyses GDP-mannose + (glucomannan)n = GDP + (glucomannan)n+1.. In terms of biological role, probable mannan synthase which consists of a 4-beta-mannosyltransferase activity on mannan using GDP-mannose. The beta-1,4-mannan product is the backbone for galactomannan synthesis by galactomannan galactosyltransferase. Galactomannan is a noncellulosic polysaccharides of plant cell wall. The polypeptide is Probable glucomannan 4-beta-mannosyltransferase 1 (Arabidopsis thaliana (Mouse-ear cress)).